Reading from the N-terminus, the 319-residue chain is Acetyl-coenzyme A carboxylase carboxyl transferase subunit alpha (319 aa).

In terms of domain architecture, CoA carboxyltransferase C-terminal spans 32 to 293; that stretch reads NVDTEVRALE…KAVLLNELEA (262 aa).

Belongs to the AccA family. Acetyl-CoA carboxylase is a heterohexamer composed of biotin carboxyl carrier protein (AccB), biotin carboxylase (AccC) and two subunits each of ACCase subunit alpha (AccA) and ACCase subunit beta (AccD).

It localises to the cytoplasm. It catalyses the reaction N(6)-carboxybiotinyl-L-lysyl-[protein] + acetyl-CoA = N(6)-biotinyl-L-lysyl-[protein] + malonyl-CoA. It participates in lipid metabolism; malonyl-CoA biosynthesis; malonyl-CoA from acetyl-CoA: step 1/1. Functionally, component of the acetyl coenzyme A carboxylase (ACC) complex. First, biotin carboxylase catalyzes the carboxylation of biotin on its carrier protein (BCCP) and then the CO(2) group is transferred by the carboxyltransferase to acetyl-CoA to form malonyl-CoA. The sequence is that of Acetyl-coenzyme A carboxylase carboxyl transferase subunit alpha from Xylella fastidiosa (strain 9a5c).